A 117-amino-acid polypeptide reads, in one-letter code: Non-specific lipid-transfer protein 2 (117 aa).

The N-terminal stretch at 1 to 25 (MAGLMKLACLVLACMIVAGPITSNA) is a signal peptide. Intrachain disulfides connect Cys29–Cys76, Cys39–Cys53, Cys54–Cys99, and Cys74–Cys113.

It belongs to the plant LTP family.

Plant non-specific lipid-transfer proteins transfer phospholipids as well as galactolipids across membranes. May play a role in wax or cutin deposition in the cell walls of expanding epidermal cells and certain secretory tissues. The chain is Non-specific lipid-transfer protein 2 (LTP2) from Brassica napus (Rape).